The primary structure comprises 100 residues: uncharacterized protein (100 aa).

Transmembrane regions (helical) follow at residues 50-70 (LLIFAVGFPWSKLVLASFSLF) and 75-95 (DVFLIVAIVSLFLISSASPEV).

The protein resides in the membrane. This is an uncharacterized protein from Saccharomyces cerevisiae (strain ATCC 204508 / S288c) (Baker's yeast).